Consider the following 702-residue polypeptide: Palmitoyltransferase AKR1 (702 aa).

A compositionally biased stretch (polar residues) spans 1 to 40 (MSTDAELQTISGLSVASKSAPSTQTEGVTASGKVESTTNA). The segment at 1–51 (MSTDAELQTISGLSVASKSAPSTQTEGVTASGKVESTTNAEEATSDVEEEE) is disordered. The Cytoplasmic segment spans residues 1–299 (MSTDAELQTI…TTNLLCFFTP (299 aa)). 6 ANK repeats span residues 49-80 (EEENPLVVAARDGNTAEVKRLCESGSYSVLDT), 83-112 (DGVTALHWAAVNNRISTCQYLVEQGAVVDA), 117-147 (LNGTPLHWACRRGLVYIVHYLIQNGADPLRS), 150-179 (QGYNALHLATHSSNVMLLVYLLHQGLPVDC), 183-212 (NGRTALHWAAYQGDALSVDVLLRWGSDVKI), and 216-245 (QGFLPLHWGIVNGSRNSLARLIEEGSDMYA). 2 helical membrane passes run 300-320 (FILILLGLVLCTFCGPIFGII) and 321-341 (LTVATLFGSIKLLKTLVLPSL). Residues 342–354 (YNGHAALLKSPFQ) are Cytoplasmic-facing. The chain crosses the membrane as a helical span at residues 355–375 (AGIFTGSAFWVTVKYLTSVLP). Topologically, residues 376–379 (ATFA) are lumenal. The helical transmembrane segment at 380-400 (SHPILNFFFASIFGLAMYCFF) threads the bilayer. The Cytoplasmic portion of the chain corresponds to 401–479 (RCMSMDPGYI…WNAIGVRNHR (79 aa)). The DHHC domain maps to 436–486 (HFCFVTYVRKPLRSKFCRQSKRVVARFDHFCPWVWNAIGVRNHRMFVLYVL). C466 (S-palmitoyl cysteine intermediate) is an active-site residue. Residues 480–500 (MFVLYVLFLQIGIPLWLALNS) traverse the membrane as a helical segment. Over 501 to 518 (AYFGELLEIKRWDPLEFY) the chain is Lumenal. A helical transmembrane segment spans residues 519–539 (LVIWISLQLIWITFLSFVQIF). Residues 540–702 (QICRSLTTSE…GEALLAESQV (163 aa)) are Cytoplasmic-facing. The interval 679 to 702 (PNQQQTNNRSTREDGEALLAESQV) is disordered.

This sequence belongs to the DHHC palmitoyltransferase family. AKR/ZDHHC17 subfamily.

It is found in the early endosome membrane. It localises to the golgi apparatus membrane. It catalyses the reaction L-cysteinyl-[protein] + hexadecanoyl-CoA = S-hexadecanoyl-L-cysteinyl-[protein] + CoA. In terms of biological role, palmitoyltransferase specific for casein kinase 1. This is Palmitoyltransferase AKR1 (AKR1) from Yarrowia lipolytica (strain CLIB 122 / E 150) (Yeast).